A 510-amino-acid chain; its full sequence is Chorion transcription factor Cf2 (510 aa).

Positions 1–10 (MIKSTTNPQE) are enriched in polar residues. The segment at 1-40 (MIKSTTNPQEQRLPRPEDQSPAPPPPPPSSATTSTAAPAT) is disordered. The span at 30 to 40 (SATTSTAAPAT) shows a compositional bias: low complexity. 2 C2H2-type zinc fingers span residues 74–97 (HYCP…QLCH) and 125–148 (HPCF…RLAH). Basic and acidic residues predominate over residues 222–237 (PEEQHHQQQLQAEHHH). Positions 222 to 279 (PEEQHHQQQLQAEHHHQQQHQQQQQQQQQQQELLEQQQREMQEQAQQQQVHHHQQDQD) are disordered. Residues 240–257 (QHQQQQQQQQQQQELLEQ) show a composition bias toward low complexity. 5 C2H2-type zinc fingers span residues 366-388 (HKCP…RKIH), 401-423 (YTCS…TRIH), 429-451 (FRCG…LTTH), 457-479 (FHCG…IRTH), and 485-508 (YTCP…TKLH).

As to expression, isoform I is found in embryos, pupae and adult somatic tissue; isoform II occurs in embryos, pupae, ovaries, testis and to a lesser extent in adult somatic tissue.

The protein localises to the nucleus. In terms of biological role, transcriptional regulator; binds to the promoter region of Cp15. Also binds to its own promoter, thus having a probable autoregulatory role. The protein is Chorion transcription factor Cf2 (Cf2) of Drosophila melanogaster (Fruit fly).